The primary structure comprises 343 residues: Glycerol-3-phosphate dehydrogenase [NAD(P)+] (343 aa).

The NADPH site is built by Ser11, Trp12, His32, Arg33, and Lys106. The sn-glycerol 3-phosphate site is built by Lys106, Gly136, and Ser138. An NADPH-binding site is contributed by Ala140. 5 residues coordinate sn-glycerol 3-phosphate: Lys192, Asp245, Ser255, Arg256, and Asn257. Lys192 functions as the Proton acceptor in the catalytic mechanism. Position 256 (Arg256) interacts with NADPH. Residues Val280 and Glu282 each coordinate NADPH.

It belongs to the NAD-dependent glycerol-3-phosphate dehydrogenase family.

The protein localises to the cytoplasm. The catalysed reaction is sn-glycerol 3-phosphate + NAD(+) = dihydroxyacetone phosphate + NADH + H(+). It carries out the reaction sn-glycerol 3-phosphate + NADP(+) = dihydroxyacetone phosphate + NADPH + H(+). It participates in membrane lipid metabolism; glycerophospholipid metabolism. Catalyzes the reduction of the glycolytic intermediate dihydroxyacetone phosphate (DHAP) to sn-glycerol 3-phosphate (G3P), the key precursor for phospholipid synthesis. The polypeptide is Glycerol-3-phosphate dehydrogenase [NAD(P)+] (Geobacillus thermodenitrificans (strain NG80-2)).